The chain runs to 345 residues: Aspartate--ammonia ligase (345 aa).

This sequence belongs to the class-II aminoacyl-tRNA synthetase family. AsnA subfamily.

Its subcellular location is the cytoplasm. It carries out the reaction L-aspartate + NH4(+) + ATP = L-asparagine + AMP + diphosphate + H(+). It functions in the pathway amino-acid biosynthesis; L-asparagine biosynthesis; L-asparagine from L-aspartate (ammonia route): step 1/1. In Bacteroides fragilis (strain ATCC 25285 / DSM 2151 / CCUG 4856 / JCM 11019 / LMG 10263 / NCTC 9343 / Onslow / VPI 2553 / EN-2), this protein is Aspartate--ammonia ligase.